A 320-amino-acid polypeptide reads, in one-letter code: Protein rlx (320 aa).

In terms of biological role, this protein is probably required for relaxation complex formation and plasmid mobilization by conjugative plasmids. This is Protein rlx (rlx) from Staphylococcus aureus.